Reading from the N-terminus, the 180-residue chain is MTALQSDLISAIRSIPDYPKPGVMFRDITTLLGNPRAFRRAIDELVHPYAGTKVDKVAGIEARGFILGGAIAHQLSAGFIPIRKRGKLPHDTVRIAYSLEYGVDEMEMHRDAVVPGDKVILVDDLIATGGTAEGAAKLLQQMGAEIVAACFIIDLPELGGRRKLEALGVNVRTLIEFEGH.

Belongs to the purine/pyrimidine phosphoribosyltransferase family. As to quaternary structure, homodimer.

The protein localises to the cytoplasm. The catalysed reaction is AMP + diphosphate = 5-phospho-alpha-D-ribose 1-diphosphate + adenine. It participates in purine metabolism; AMP biosynthesis via salvage pathway; AMP from adenine: step 1/1. Its function is as follows. Catalyzes a salvage reaction resulting in the formation of AMP, that is energically less costly than de novo synthesis. The polypeptide is Adenine phosphoribosyltransferase (Sinorhizobium medicae (strain WSM419) (Ensifer medicae)).